The primary structure comprises 34 residues: Unknown protein 5 (34 aa).

The polypeptide is Unknown protein 5 (Pseudotsuga menziesii (Douglas-fir)).